The primary structure comprises 187 residues: Dihydrofolate reductase (187 aa).

In terms of domain architecture, DHFR spans 4–185 (PLNCIVAVSQ…IKYKFEVYEK (182 aa)). Residues Ala10 and 16–22 (GIGKNGD) each bind NADP(+). Position 31–36 (31–36 (EFKYFQ)) interacts with substrate. Lys33 is subject to N6-acetyllysine; alternate. At Lys33 the chain carries N6-succinyllysine; alternate. Residue 55-57 (RKT) participates in NADP(+) binding. Positions 65 and 71 each coordinate substrate. NADP(+)-binding positions include 77–79 (SRE) and 117–124 (GGSSVYQE).

This sequence belongs to the dihydrofolate reductase family. As to quaternary structure, homodimer.

The protein resides in the mitochondrion. The protein localises to the cytoplasm. The catalysed reaction is (6S)-5,6,7,8-tetrahydrofolate + NADP(+) = 7,8-dihydrofolate + NADPH + H(+). It functions in the pathway cofactor biosynthesis; tetrahydrofolate biosynthesis; 5,6,7,8-tetrahydrofolate from 7,8-dihydrofolate: step 1/1. In terms of biological role, key enzyme in folate metabolism. Contributes to the de novo mitochondrial thymidylate biosynthesis pathway. Catalyzes an essential reaction for de novo glycine and purine synthesis, and for DNA precursor synthesis. Binds its own mRNA. This Mus musculus (Mouse) protein is Dihydrofolate reductase (Dhfr).